The following is a 405-amino-acid chain: MDINKPGWNQSDQQATAYDPNQQQYYGDGSTYYDPDQAVDPNQAYYPDPNTYPDAAAYYGYGQDGQAYPQDYAQDPNQAYYADPNAYQDPNAYTDPNAYVDPNAYQDPNAYVDPNNYTDPNAYYGYGQDGQAYPQDYAQDPNQAYYADPNAYQDPNAYTDPYYVTSTDPNAYYGQVDNVPALEASDLAYEVTPQEQAAEQELFSEPETKVIREIHEFPFEKIRSYFQTDFDSYNSRLTQLKDKLDNAIFSMRKAIDTVKENSANLQIMKQNFERQLKEQQTQRLTSNTDAEKIGAKINQLEERMQRLSRTMESVEWTKKEPRQEQFDPRFVDPRNFNNYVNNTDTMMSMFEKVLMMNLLRSTTPVQPPVQYFTPQPLTASPRPVYEEPISASFRRRGYRGDEFYE.

Residues M1 to Y58 are disordered. The span at G7–Y25 shows a compositional bias: polar residues. Repeat copies occupy residues D40 to Y45, D75 to Y80, D83 to Y87, D89 to Y93, D95 to Y99, D101 to Y105, D107 to Y111, D119 to Y123, D140 to Y145, D148 to Y152, D154 to Y158, and D168 to Y172. The tract at residues D40 to Y172 is 12 X 5 AA repeats of D-P-N-Q-A-Y.

Post-translationally, the N-terminus is blocked.

Its subcellular location is the cell membrane. The chain is Proline-rich P65 protein (p65) from Mycoplasma pneumoniae (strain ATCC 29342 / M129 / Subtype 1) (Mycoplasmoides pneumoniae).